The sequence spans 367 residues: Ribosomal lysine N-methyltransferase 5 (367 aa).

Residues W110, 170–172 (GAG), D192, W256, and M288 contribute to the S-adenosyl-L-methionine site.

This sequence belongs to the class I-like SAM-binding methyltransferase superfamily. RKM5 family.

In terms of biological role, S-adenosyl-L-methionine-dependent protein-lysine N-methyltransferase that monomethylates 60S ribosomal protein L1 (RPL1A and RPL1B) at 'Lys-46'. In Saccharomyces cerevisiae (strain JAY291) (Baker's yeast), this protein is Ribosomal lysine N-methyltransferase 5 (RKM5).